We begin with the raw amino-acid sequence, 74 residues long: Kappa-stichotoxin-Sgt4a (74 aa).

An N-terminal signal peptide occupies residues 1–22 (MKFQVIAAVLLIEFCLCVVVTA). The propeptide occupies 23–39 (RMELQDVEDVENGFQKR). Positions 42 to 74 (CIDTIPQSRCTAFQCKHSMKYRLSFCRKTCGTC) constitute a ShKT domain. 3 cysteine pairs are disulfide-bonded: cysteine 42/cysteine 74, cysteine 51/cysteine 67, and cysteine 56/cysteine 71.

This sequence belongs to the sea anemone type 1 potassium channel toxin family. Type 1a subfamily.

Its subcellular location is the secreted. The protein resides in the nematocyst. Inhibits voltage-gated potassium channels (Kv) with higher potency for Kv1.1/KCNA1 and Kv1.3/KCNA3. The polypeptide is Kappa-stichotoxin-Sgt4a (Stichodactyla gigantea (Giant carpet anemone)).